The following is a 271-amino-acid chain: Orotidine 5'-phosphate decarboxylase (271 aa).

The Proton donor role is filled by Lys95.

Belongs to the OMP decarboxylase family. Type 2 subfamily.

It catalyses the reaction orotidine 5'-phosphate + H(+) = UMP + CO2. It participates in pyrimidine metabolism; UMP biosynthesis via de novo pathway; UMP from orotate: step 2/2. The protein is Orotidine 5'-phosphate decarboxylase of Ralstonia pickettii (strain 12J).